The primary structure comprises 96 residues: UPF0235 protein YggU (96 aa).

The protein belongs to the UPF0235 family.

This Escherichia coli (strain K12 / MC4100 / BW2952) protein is UPF0235 protein YggU.